Here is a 390-residue protein sequence, read N- to C-terminus: NADH-quinone oxidoreductase subunit D (390 aa).

The protein belongs to the complex I 49 kDa subunit family. In terms of assembly, NDH-1 is composed of 14 different subunits. Subunits NuoB, C, D, E, F, and G constitute the peripheral sector of the complex.

The protein resides in the cell inner membrane. The enzyme catalyses a quinone + NADH + 5 H(+)(in) = a quinol + NAD(+) + 4 H(+)(out). Its function is as follows. NDH-1 shuttles electrons from NADH, via FMN and iron-sulfur (Fe-S) centers, to quinones in the respiratory chain. The immediate electron acceptor for the enzyme in this species is believed to be ubiquinone. Couples the redox reaction to proton translocation (for every two electrons transferred, four hydrogen ions are translocated across the cytoplasmic membrane), and thus conserves the redox energy in a proton gradient. The protein is NADH-quinone oxidoreductase subunit D of Geobacter sulfurreducens (strain ATCC 51573 / DSM 12127 / PCA).